We begin with the raw amino-acid sequence, 60 residues long: Large ribosomal subunit protein bL33 (60 aa).

The protein belongs to the bacterial ribosomal protein bL33 family.

In Chlorobium chlorochromatii (strain CaD3), this protein is Large ribosomal subunit protein bL33.